A 503-amino-acid chain; its full sequence is Maturase K (503 aa).

It belongs to the intron maturase 2 family. MatK subfamily.

It localises to the plastid. Its subcellular location is the chloroplast. In terms of biological role, usually encoded in the trnK tRNA gene intron. Probably assists in splicing its own and other chloroplast group II introns. In Vicia villosa (Hairy vetch), this protein is Maturase K.